The sequence spans 103 residues: Co-chaperonin GroES (103 aa).

Belongs to the GroES chaperonin family. In terms of assembly, heptamer of 7 subunits arranged in a ring. Interacts with the chaperonin GroEL.

It is found in the cytoplasm. Its function is as follows. Together with the chaperonin GroEL, plays an essential role in assisting protein folding. The GroEL-GroES system forms a nano-cage that allows encapsulation of the non-native substrate proteins and provides a physical environment optimized to promote and accelerate protein folding. GroES binds to the apical surface of the GroEL ring, thereby capping the opening of the GroEL channel. In Synechococcus sp. (strain CC9311), this protein is Co-chaperonin GroES.